A 258-amino-acid chain; its full sequence is 5'-nucleotidase SurE (258 aa).

Residues Asp-9, Asp-10, Ser-42, and Asn-96 each coordinate a divalent metal cation.

This sequence belongs to the SurE nucleotidase family. Requires a divalent metal cation as cofactor.

It is found in the cytoplasm. The enzyme catalyses a ribonucleoside 5'-phosphate + H2O = a ribonucleoside + phosphate. Its function is as follows. Nucleotidase that shows phosphatase activity on nucleoside 5'-monophosphates. This chain is 5'-nucleotidase SurE, found in Campylobacter jejuni subsp. jejuni serotype O:23/36 (strain 81-176).